The sequence spans 391 residues: Multidrug resistance protein MdtL (391 aa).

Transmembrane regions (helical) follow at residues 4–24 (FLICSFALVLLYPAGIDMYLV), 42–62 (IAFSVYLAGMAAAMLFAGKVA), 69–89 (PVAIPGAALFIIASVFCSLAE), 93–113 (LFLAGRFLQGLGAGCCYVVAF), 131–151 (LLNGITCIIPVLAPVLGHLIM), 158–178 (SLFWTMATMGIAVLMLSLFIL), 203–222 (FFLSRVVITTLSVSVILTFV), 245–265 (ALTAGVSMTVSFSTPFALGIF), 269–289 (TLMITSQVLFLAAGITLAVSP), 293–313 (VSLFGITLICAGFSVGFGVAM), 331–351 (LGIAQVCGSSLWIWLAAVVGI), and 356–376 (MLIGILIACSIVSLLLIMFVA).

This sequence belongs to the major facilitator superfamily. DHA1 family. MdtL (TC 2.A.1.2.22) subfamily.

The protein localises to the cell inner membrane. Confers resistance to chloramphenicol. This is Multidrug resistance protein MdtL from Escherichia coli O17:K52:H18 (strain UMN026 / ExPEC).